The sequence spans 127 residues: Holo-[acyl-carrier-protein] synthase (127 aa).

The Mg(2+) site is built by aspartate 9 and glutamate 58.

This sequence belongs to the P-Pant transferase superfamily. AcpS family. Mg(2+) is required as a cofactor.

Its subcellular location is the cytoplasm. It catalyses the reaction apo-[ACP] + CoA = holo-[ACP] + adenosine 3',5'-bisphosphate + H(+). Functionally, transfers the 4'-phosphopantetheine moiety from coenzyme A to a Ser of acyl-carrier-protein. This Shewanella sp. (strain MR-7) protein is Holo-[acyl-carrier-protein] synthase.